The primary structure comprises 425 residues: Pre-mRNA-splicing factor RBM22 (425 aa).

Residues 159–186 (RNRPHICSFWVKGECKRGEECPYRHEKP) form a C3H1-type zinc finger. The RRM domain maps to 232-305 (TTLYIGGLGE…RRLNVKWGRS (74 aa)). Disordered stretches follow at residues 304 to 331 (RSQAARGKGEKDGVTESGIRLEPVPGLP) and 384 to 425 (HTMD…HGGP). Residues 389–399 (MAPPVPPPMAL) show a composition bias toward pro residues.

It belongs to the SLT11 family. As to quaternary structure, component of the pre-catalytic and catalytic spliceosome complexes. Component of the postcatalytic spliceosome P complex.

The protein localises to the nucleus. It localises to the cytoplasm. In terms of biological role, required for pre-mRNA splicing as component of the activated spliceosome. Involved in the first step of pre-mRNA splicing. Binds directly to the internal stem-loop (ISL) domain of the U6 snRNA and to the pre-mRNA intron near the 5' splice site during the activation and catalytic phases of the spliceosome cycle. Required for normal early embryogenesis. In Danio rerio (Zebrafish), this protein is Pre-mRNA-splicing factor RBM22 (rbm22).